The primary structure comprises 768 residues: P-selectin (768 aa).

The first 41 residues, methionine 1–alanine 41, serve as a signal peptide directing secretion. Residues tryptophan 42–alanine 709 lie on the Extracellular side of the membrane. Positions valine 58–cysteine 158 constitute a C-type lectin domain. Cystine bridges form between cysteine 60-cysteine 158, cysteine 131-cysteine 150, cysteine 163-cysteine 174, cysteine 168-cysteine 183, cysteine 185-cysteine 194, cysteine 200-cysteine 244, cysteine 230-cysteine 257, cysteine 262-cysteine 306, cysteine 292-cysteine 319, cysteine 324-cysteine 368, cysteine 354-cysteine 381, cysteine 386-cysteine 430, cysteine 416-cysteine 443, cysteine 448-cysteine 492, cysteine 478-cysteine 505, cysteine 510-cysteine 554, cysteine 540-cysteine 567, cysteine 580-cysteine 624, cysteine 610-cysteine 637, cysteine 642-cysteine 686, and cysteine 672-cysteine 699. Ca(2+)-binding residues include glutamate 121, asparagine 123, and asparagine 124. Asparagine 123 lines the a carbohydrate pocket. Glutamate 133 and asparagine 146 together coordinate a carbohydrate. Residues asparagine 146 and aspartate 147 each contribute to the Ca(2+) site. Positions tyrosine 159 to glutamate 195 constitute an EGF-like domain. Sushi domains are found at residues lysine 198–alanine 259, valine 260–alanine 321, isoleucine 322–alanine 383, leucine 384–alanine 445, valine 446–alanine 507, isoleucine 508–glycine 569, valine 578–alanine 639, and valine 640–alanine 701. The N-linked (GlcNAc...) asparagine glycan is linked to asparagine 398. An N-linked (GlcNAc...) asparagine glycan is attached at asparagine 603. N-linked (GlcNAc...) asparagine glycans are attached at residues asparagine 654, asparagine 661, and asparagine 679. The helical transmembrane segment at leucine 710–leucine 733 threads the bilayer. The Cytoplasmic portion of the chain corresponds to arginine 734–proline 768. Cysteine 745 carries S-palmitoyl cysteine; alternate lipidation. Residue cysteine 745 is the site of S-stearoyl cysteine; alternate attachment. The short motif at tyrosine 756 to phenylalanine 759 is the Endocytosis signal element. The interval phenylalanine 759–proline 768 is interaction with SNX17.

Belongs to the selectin/LECAM family. As to quaternary structure, interacts with SNX17. Interacts with SELPLG/PSGL1 and PODXL2 and mediates neutrophil adhesion and leukocyte rolling. This interaction requires the sialyl-Lewis X epitope of SELPLG and PODXL2, and specific tyrosine sulfation on SELPLG. Interacts (via C-type lectin domain) with alpha-IIb/beta3 integrin ITGA2B:ITGB3 and alpha-V/beta-3 integrin ITGAV:ITGB3. Interacts with alpha5/beta1 integrin ITGA5:ITGB1 and alpha4/beta1 integrin ITGA4:ITGB. Stored in the alpha-granules of platelets and Weibel-Palade bodies of endothelial cells. Upon cell activation by agonists, P-selectin is transported rapidly to the cell surface.

Its subcellular location is the cell membrane. Functionally, ca(2+)-dependent receptor for myeloid cells that binds to carbohydrates on neutrophils and monocytes. Mediates the interaction of activated endothelial cells or platelets with leukocytes. The ligand recognized is sialyl-Lewis X. Mediates rapid rolling of leukocyte rolling over vascular surfaces during the initial steps in inflammation through interaction with SELPLG. Mediates cell-cell interactions and cell adhesion via the interaction with integrin alpha-IIb/beta3 (ITGA2B:ITGB3) and integrin alpha-V/beta-3 (ITGAV:ITGB3). This is P-selectin (Selp) from Mus musculus (Mouse).